The sequence spans 345 residues: S-adenosylmethionine:tRNA ribosyltransferase-isomerase (345 aa).

This sequence belongs to the QueA family. As to quaternary structure, monomer.

Its subcellular location is the cytoplasm. It catalyses the reaction 7-aminomethyl-7-carbaguanosine(34) in tRNA + S-adenosyl-L-methionine = epoxyqueuosine(34) in tRNA + adenine + L-methionine + 2 H(+). The protein operates within tRNA modification; tRNA-queuosine biosynthesis. Transfers and isomerizes the ribose moiety from AdoMet to the 7-aminomethyl group of 7-deazaguanine (preQ1-tRNA) to give epoxyqueuosine (oQ-tRNA). The protein is S-adenosylmethionine:tRNA ribosyltransferase-isomerase of Azoarcus sp. (strain BH72).